We begin with the raw amino-acid sequence, 250 residues long: Small ribosomal subunit protein uS3 (250 aa).

The 73-residue stretch at 39 to 111 folds into the KH type-2 domain; that stretch reads IRTLIKNHYP…KVQINIFEVK (73 aa).

It belongs to the universal ribosomal protein uS3 family. Part of the 30S ribosomal subunit. Forms a tight complex with proteins S10 and S14.

Its function is as follows. Binds the lower part of the 30S subunit head. Binds mRNA in the 70S ribosome, positioning it for translation. In Rubus stunt phytoplasma, this protein is Small ribosomal subunit protein uS3.